The following is a 476-amino-acid chain: Glutamate--tRNA ligase (476 aa).

The short motif at 9–19 (PSPTGKLHIGT) is the 'HIGH' region element. A compositionally biased stretch (basic and acidic residues) spans 109-129 (REEQKSRNKPPRYDNRHRSLS). The tract at residues 109 to 133 (REEQKSRNKPPRYDNRHRSLSTEEE) is disordered. The 'KMSKS' region signature appears at 248–252 (KLSKR). K251 is an ATP binding site.

It belongs to the class-I aminoacyl-tRNA synthetase family. Glutamate--tRNA ligase type 1 subfamily. In terms of assembly, monomer.

It localises to the cytoplasm. It carries out the reaction tRNA(Glu) + L-glutamate + ATP = L-glutamyl-tRNA(Glu) + AMP + diphosphate. In terms of biological role, catalyzes the attachment of glutamate to tRNA(Glu) in a two-step reaction: glutamate is first activated by ATP to form Glu-AMP and then transferred to the acceptor end of tRNA(Glu). The protein is Glutamate--tRNA ligase of Prochlorococcus marinus (strain MIT 9211).